Reading from the N-terminus, the 3582-residue chain is Ubiquitin carboxyl-terminal hydrolase 34 (3582 aa).

Residues Ser352, Ser486, Ser487, and Ser490 each carry the phosphoserine modification. Disordered stretches follow at residues 503-533 (EEEE…HQSG), 551-670 (QQRL…ELRN), 682-705 (GESQ…VFNT), 775-801 (HHHH…DGHM), and 1496-1515 (TGSY…DQVE). The span at 510–524 (AAPSPWSPAASPQSS) shows a compositional bias: low complexity. Polar residues predominate over residues 560 to 570 (SMQGSSDETAN). The span at 571–590 (SGEDGSSGPGSSSGHSDGSS) shows a compositional bias: low complexity. Positions 591–609 (NEVNSSHASQSAGSPGSEV) are enriched in polar residues. Residues 610 to 653 (QSEDIADIEALKEEEEEEEEEEEEEEEEDDEEEEDEEEDDDDDD) show a composition bias toward acidic residues. Over residues 684–697 (SQGTSERNGTNSGT) the composition is skewed to polar residues. Residues 775 to 798 (HHHHHHHHHHHHHHHHHHHHHHHD) are compositionally biased toward basic residues. Positions 1504–1514 (PDSDDSSEDQV) are enriched in acidic residues. Phosphoserine is present on Ser1506. The 346-residue stretch at 1931–2276 (VGLTNLGATC…SAYMLFYKRM (346 aa)) folds into the USP domain. Catalysis depends on Cys1940, which acts as the Nucleophile. Residue His2201 is the Proton acceptor of the active site. Position 2525 is a phosphoserine (Ser2525). The interval 3369 to 3484 (SLQEQEAKER…QSNNGRFDDC (116 aa)) is disordered. Basic and acidic residues predominate over residues 3373-3384 (QEAKERKTKDDE). Residues Ser3395 and Ser3396 each carry the phosphoserine modification. Phosphothreonine is present on Thr3418. Phosphoserine occurs at positions 3423 and 3443. Residues 3463–3484 (DGSHIRSQHAEEQSNNGRFDDC) show a composition bias toward basic and acidic residues. At Ser3539 the chain carries Phosphoserine.

It belongs to the peptidase C19 family. In terms of assembly, interacts with AXIN1 and AXIN2.

It carries out the reaction Thiol-dependent hydrolysis of ester, thioester, amide, peptide and isopeptide bonds formed by the C-terminal Gly of ubiquitin (a 76-residue protein attached to proteins as an intracellular targeting signal).. Its function is as follows. Ubiquitin hydrolase that can remove conjugated ubiquitin from AXIN1 and AXIN2, thereby acting as a regulator of Wnt signaling pathway. Acts as an activator of the Wnt signaling pathway downstream of the beta-catenin destruction complex by deubiquitinating and stabilizing AXIN1 and AXIN2, leading to promote nuclear accumulation of AXIN1 and AXIN2 and positively regulate beta-catenin (CTNBB1)-mediated transcription. Recognizes and hydrolyzes the peptide bond at the C-terminal Gly of ubiquitin. Involved in the processing of poly-ubiquitin precursors as well as that of ubiquitinated proteins. The protein is Ubiquitin carboxyl-terminal hydrolase 34 (Usp34) of Mus musculus (Mouse).